Consider the following 396-residue polypeptide: Putative amidohydrolase YhaA (396 aa).

Aspartate 85 is an active-site residue. The active-site Proton acceptor is glutamate 143. Residues glutamate 144, arginine 182, and histidine 368 each coordinate Zn(2+).

The protein belongs to the peptidase M20A family. Zn(2+) is required as a cofactor. Requires Co(2+) as cofactor.

The chain is Putative amidohydrolase YhaA (yhaA) from Bacillus subtilis (strain 168).